A 100-amino-acid chain; its full sequence is Omega toxin Ap2 (100 aa).

The signal sequence occupies residues 1–22 (MNTTQVILFAVVLVLTVTVGQA). A propeptide spanning residues 23–57 (DEDSAETSLLRKLEEAEASMFGQYLEESKNSPEQR) is cleaved from the precursor. 3 disulfide bridges follow: C58/C74, C65/C79, and C73/C94. S99 carries the post-translational modification Serine amide.

The protein belongs to the neurotoxin 14 (magi-1) family. 08 (Ltx-4) subfamily. In terms of tissue distribution, expressed by the venom duct.

It is found in the secreted. Inhibits 31.17% of Cav2.1/CACNA1A current at 1 uM concentration. This is Omega toxin Ap2 from Acanthoscurria paulensis (Brazilian giant black tarantula spider).